A 134-amino-acid polypeptide reads, in one-letter code: Cytochrome b5 (134 aa).

In terms of domain architecture, Cytochrome b5 heme-binding spans 6–82 (TKTFTRAEVA…MKKYKIGELV (77 aa)). Histidine 41 and histidine 65 together coordinate heme. The disordered stretch occupies residues 86 to 105 (RTSVAQKSEPTWSTEQQTEE). The span at 87–105 (TSVAQKSEPTWSTEQQTEE) shows a compositional bias: polar residues. A helical membrane pass occupies residues 111 to 131 (WLVPLVLCLVATLFYKFFFGG).

Belongs to the cytochrome b5 family.

It localises to the endoplasmic reticulum membrane. The protein resides in the microsome membrane. Its function is as follows. Cytochrome b5 is a membrane-bound hemoprotein which functions as an electron carrier for several membrane-bound oxygenases. This chain is Cytochrome b5 (Cyt-b5), found in Drosophila melanogaster (Fruit fly).